Here is a 99-residue protein sequence, read N- to C-terminus: Large ribosomal subunit protein bL21 (99 aa).

This sequence belongs to the bacterial ribosomal protein bL21 family. Part of the 50S ribosomal subunit. Contacts protein L20.

Functionally, this protein binds to 23S rRNA in the presence of protein L20. This chain is Large ribosomal subunit protein bL21, found in Mesoplasma florum (strain ATCC 33453 / NBRC 100688 / NCTC 11704 / L1) (Acholeplasma florum).